A 193-amino-acid chain; its full sequence is Probable gluconokinase (193 aa).

Residue 21-28 coordinates ATP; that stretch reads GPAGSGKT.

This sequence belongs to the gluconokinase GntK/GntV family.

It carries out the reaction D-gluconate + ATP = 6-phospho-D-gluconate + ADP + H(+). The protein operates within carbohydrate acid metabolism; D-gluconate degradation. In Schizosaccharomyces pombe (strain 972 / ATCC 24843) (Fission yeast), this protein is Probable gluconokinase.